The following is a 175-amino-acid chain: Adenylyl-sulfate kinase (175 aa).

Residue 12-19 (GLSGAGKT) coordinates ATP. Ser86 serves as the catalytic Phosphoserine intermediate.

Belongs to the APS kinase family.

It carries out the reaction adenosine 5'-phosphosulfate + ATP = 3'-phosphoadenylyl sulfate + ADP + H(+). Its pathway is sulfur metabolism; hydrogen sulfide biosynthesis; sulfite from sulfate: step 2/3. Catalyzes the synthesis of activated sulfate. This Synechococcus sp. (strain JA-2-3B'a(2-13)) (Cyanobacteria bacterium Yellowstone B-Prime) protein is Adenylyl-sulfate kinase.